A 336-amino-acid polypeptide reads, in one-letter code: Fructose-1,6-bisphosphatase class 1 (336 aa).

Mg(2+)-binding residues include glutamate 90, aspartate 112, leucine 114, and aspartate 115. Substrate contacts are provided by residues 115–118 (DGSS), asparagine 211, and lysine 277. Glutamate 283 contributes to the Mg(2+) binding site.

This sequence belongs to the FBPase class 1 family. Homotetramer. It depends on Mg(2+) as a cofactor.

The protein localises to the cytoplasm. It catalyses the reaction beta-D-fructose 1,6-bisphosphate + H2O = beta-D-fructose 6-phosphate + phosphate. Its pathway is carbohydrate biosynthesis; gluconeogenesis. This is Fructose-1,6-bisphosphatase class 1 from Pseudomonas aeruginosa (strain ATCC 15692 / DSM 22644 / CIP 104116 / JCM 14847 / LMG 12228 / 1C / PRS 101 / PAO1).